Reading from the N-terminus, the 200-residue chain is Holliday junction branch migration complex subunit RuvA (200 aa).

The segment at 1-64 is domain I; the sequence is MFTYFRGELI…EDLMQLFGFL (64 aa). The interval 65–143 is domain II; that stretch reads EEEERQLFRL…KLRPSGGTKS (79 aa). Residues 144–148 are flexible linker; sequence VSRLS. The tract at residues 148-200 is domain III; it reads SESSMRDDAVNALVTLGFLRSVAQKAVTESLTSLRNPQVEDLVRDALLTIRTP.

This sequence belongs to the RuvA family. As to quaternary structure, homotetramer. Forms an RuvA(8)-RuvB(12)-Holliday junction (HJ) complex. HJ DNA is sandwiched between 2 RuvA tetramers; dsDNA enters through RuvA and exits via RuvB. An RuvB hexamer assembles on each DNA strand where it exits the tetramer. Each RuvB hexamer is contacted by two RuvA subunits (via domain III) on 2 adjacent RuvB subunits; this complex drives branch migration. In the full resolvosome a probable DNA-RuvA(4)-RuvB(12)-RuvC(2) complex forms which resolves the HJ.

Its subcellular location is the cytoplasm. Its function is as follows. The RuvA-RuvB-RuvC complex processes Holliday junction (HJ) DNA during genetic recombination and DNA repair, while the RuvA-RuvB complex plays an important role in the rescue of blocked DNA replication forks via replication fork reversal (RFR). RuvA specifically binds to HJ cruciform DNA, conferring on it an open structure. The RuvB hexamer acts as an ATP-dependent pump, pulling dsDNA into and through the RuvAB complex. HJ branch migration allows RuvC to scan DNA until it finds its consensus sequence, where it cleaves and resolves the cruciform DNA. The sequence is that of Holliday junction branch migration complex subunit RuvA from Chlorobium phaeobacteroides (strain BS1).